A 116-amino-acid polypeptide reads, in one-letter code: Holo-[acyl-carrier-protein] synthase (116 aa).

Residues D5 and E50 each contribute to the Mg(2+) site.

The protein belongs to the P-Pant transferase superfamily. AcpS family. The cofactor is Mg(2+).

The protein localises to the cytoplasm. The enzyme catalyses apo-[ACP] + CoA = holo-[ACP] + adenosine 3',5'-bisphosphate + H(+). Its function is as follows. Transfers the 4'-phosphopantetheine moiety from coenzyme A to a Ser of acyl-carrier-protein. The sequence is that of Holo-[acyl-carrier-protein] synthase from Campylobacter lari (strain RM2100 / D67 / ATCC BAA-1060).